We begin with the raw amino-acid sequence, 352 residues long: Holliday junction branch migration complex subunit RuvB (352 aa).

The interval 4 to 185 (ADRLIAATGP…FGIVQRLEFY (182 aa)) is large ATPase domain (RuvB-L). ATP is bound by residues Ile24, Arg25, Gly66, Lys69, Thr70, Thr71, 132-134 (EDF), Arg175, Tyr185, and Arg222. A Mg(2+)-binding site is contributed by Thr70. The interval 186–256 (STADLATIVS…IADLALNLLD (71 aa)) is small ATPAse domain (RuvB-S). Residues 259–352 (ERGFDHQDRR…VDEFLDAVDD (94 aa)) form a head domain (RuvB-H) region. Arg295, Arg314, and Arg319 together coordinate DNA.

This sequence belongs to the RuvB family. In terms of assembly, homohexamer. Forms an RuvA(8)-RuvB(12)-Holliday junction (HJ) complex. HJ DNA is sandwiched between 2 RuvA tetramers; dsDNA enters through RuvA and exits via RuvB. An RuvB hexamer assembles on each DNA strand where it exits the tetramer. Each RuvB hexamer is contacted by two RuvA subunits (via domain III) on 2 adjacent RuvB subunits; this complex drives branch migration. In the full resolvosome a probable DNA-RuvA(4)-RuvB(12)-RuvC(2) complex forms which resolves the HJ.

It is found in the cytoplasm. The catalysed reaction is ATP + H2O = ADP + phosphate + H(+). Functionally, the RuvA-RuvB-RuvC complex processes Holliday junction (HJ) DNA during genetic recombination and DNA repair, while the RuvA-RuvB complex plays an important role in the rescue of blocked DNA replication forks via replication fork reversal (RFR). RuvA specifically binds to HJ cruciform DNA, conferring on it an open structure. The RuvB hexamer acts as an ATP-dependent pump, pulling dsDNA into and through the RuvAB complex. RuvB forms 2 homohexamers on either side of HJ DNA bound by 1 or 2 RuvA tetramers; 4 subunits per hexamer contact DNA at a time. Coordinated motions by a converter formed by DNA-disengaged RuvB subunits stimulates ATP hydrolysis and nucleotide exchange. Immobilization of the converter enables RuvB to convert the ATP-contained energy into a lever motion, pulling 2 nucleotides of DNA out of the RuvA tetramer per ATP hydrolyzed, thus driving DNA branch migration. The RuvB motors rotate together with the DNA substrate, which together with the progressing nucleotide cycle form the mechanistic basis for DNA recombination by continuous HJ branch migration. Branch migration allows RuvC to scan DNA until it finds its consensus sequence, where it cleaves and resolves cruciform DNA. This is Holliday junction branch migration complex subunit RuvB from Pseudomonas fluorescens (strain ATCC BAA-477 / NRRL B-23932 / Pf-5).